The chain runs to 1691 residues: ADAMTS-like protein 3 (1691 aa).

The signal sequence occupies residues 1–26; that stretch reads MASWTSPWWVLIGMVFMHSPLPQTTA. One can recognise a TSP type-1 1 domain in the interval 75–124; that stretch reads DGNWDAWGDWSDCSRTCGGGASYSLRRCLTGRNCEGQNIRYKTCSNHDCP. 3 disulfides stabilise this stretch: Cys-87–Cys-118, Cys-91–Cys-123, and Cys-102–Cys-108. Asn-293 is a glycosylation site (N-linked (GlcNAc...) asparagine). TSP type-1 domains lie at 418-468, 478-535, and 564-626; these read PLPR…APKP, DCPK…IPCY, and EEPT…EACD. 3 cysteine pairs are disulfide-bonded: Cys-576–Cys-620, Cys-580–Cys-625, and Cys-591–Cys-609. Asn-681 carries an N-linked (GlcNAc...) asparagine glycan. TSP type-1 domains are found at residues 703–760, 763–818, and 819–881; these read CPPR…FDCP, WHIE…ARTD, and CPPH…PECS. N-linked (GlcNAc...) asparagine glycosylation is present at Asn-797. Intrachain disulfides connect Cys-831–Cys-875, Cys-835–Cys-880, and Cys-846–Cys-863. One can recognise an Ig-like C2-type 1 domain in the interval 896-992; that stretch reads PQILSVQRVY…IAGSAQETVV (97 aa). N-linked (GlcNAc...) asparagine glycosylation is found at Asn-915 and Asn-927. Cys-934 and Cys-982 are oxidised to a cystine. Asn-1102 carries N-linked (GlcNAc...) asparagine glycosylation. The tract at residues 1146 to 1184 is disordered; that stretch reads PPAAQLRGETGSVSQSSHAKNSGKLTFKPKGPVLMRQSQ. Residues 1156–1169 show a composition bias toward polar residues; sequence GSVSQSSHAKNSGK. The Ig-like C2-type 2 domain maps to 1185–1279; it reads PPSISFNKTI…GSDVESSSVL (95 aa). Residue Asn-1191 is glycosylated (N-linked (GlcNAc...) asparagine). Cys-1215 and Cys-1263 are joined by a disulfide. N-linked (GlcNAc...) asparagine glycosylation is found at Asn-1292, Asn-1316, Asn-1330, Asn-1343, Asn-1349, Asn-1356, Asn-1432, Asn-1516, Asn-1574, and Asn-1591. The Ig-like C2-type 3 domain maps to 1296 to 1378; that stretch reads PEHNHLSVVV…ATNALGKAVA (83 aa). Cys-1321 and Cys-1367 are oxidised to a cystine. 2 TSP type-1 domains span residues 1424-1482 and 1483-1545; these read QEPF…NIRD and CPAR…HPCV. The region spanning 1597–1644 is the TSP type-1 10 domain; sequence CDVCWHTGPWKPCTAACGRGFQSRKVDCIHTRSCKPVAKRHCVQKKKP. Positions 1655–1691 constitute a PLAC domain; it reads CDRDCTDTTHYCMFVKHLNLCSLDRYKQRCCQSCQEG.

Glycosylated. Can be O-fucosylated by POFUT2 on a serine or a threonine residue found within the consensus sequence C1-X(2)-(S/T)-C2-G of the TSP type-1 repeat domains where C1 and C2 are the first and second cysteine residue of the repeat, respectively. Fucosylated repeats can then be further glycosylated by the addition of a beta-1,3-glucose residue by the glucosyltransferase, B3GALTL. Fucosylation mediates the efficient secretion of ADAMTS family members. Can also be C-glycosylated with one or two mannose molecules on tryptophan residues within the consensus sequence W-X-X-W of the TPRs, and N-glycosylated. These other glycosylations can also facilitate secretion. In terms of tissue distribution, expressed in epithelial cells of the colon, fallopian tube, skin, breast, prostate, epididymis, liver, pancreatic islets and bile ducts, as well as by vascular endothelial cells, smooth muscle cells, fibroblasts, cortical and ganglionic neurons and cardiac myocytes. Also expressed by malignant epithelial cells in colon cancer, as well as breast, prostate, renal and skin tumors. Expression is significantly reduced in colon cancer compared to normal colon.

The protein resides in the secreted. The protein localises to the extracellular space. It localises to the extracellular matrix. The protein is ADAMTS-like protein 3 (ADAMTSL3) of Homo sapiens (Human).